The primary structure comprises 260 residues: MELVRQNNPLIHCMTNDVVMNFTANGLLAIGASPVMAFSAAETEDMASVADALLLNIGTPSNEGVDSMVLAGKAANRAGKPVIFDPVGVGATPFRNEISKRILNEVDVAVVRGNAGEIAALLGQAGTVKGVDGKINADVKELCLQAAKALRTVVVVTGEVDAVSNGEQLVAVANGHEWLTKVVGTGCLLGGVIAAYAAVQPNSLVDAAVEALAFYGVCAEQAYEQTKKEGIGSFQQTFLNELGNMTDEKAAALKRVEQIC.

Methionine 36 contacts substrate. Arginine 112 and threonine 157 together coordinate ATP. A substrate-binding site is contributed by glycine 184.

This sequence belongs to the Thz kinase family. Mg(2+) is required as a cofactor.

The catalysed reaction is 5-(2-hydroxyethyl)-4-methylthiazole + ATP = 4-methyl-5-(2-phosphooxyethyl)-thiazole + ADP + H(+). It functions in the pathway cofactor biosynthesis; thiamine diphosphate biosynthesis; 4-methyl-5-(2-phosphoethyl)-thiazole from 5-(2-hydroxyethyl)-4-methylthiazole: step 1/1. Catalyzes the phosphorylation of the hydroxyl group of 4-methyl-5-beta-hydroxyethylthiazole (THZ). This chain is Hydroxyethylthiazole kinase, found in Shouchella clausii (strain KSM-K16) (Alkalihalobacillus clausii).